Consider the following 487-residue polypeptide: 7-deoxyloganetin glucosyltransferase (487 aa).

H25 acts as the Proton acceptor in catalysis. H25 serves as a coordination point for an anthocyanidin. The Charge relay role is filled by D129. Residues T151, Q366, H381, W384, N385, S386, and E389 each coordinate UDP-alpha-D-glucose. Position 404 (A404) interacts with an anthocyanidin. UDP-alpha-D-glucose is bound by residues E405 and Q406.

This sequence belongs to the UDP-glycosyltransferase family. As to expression, expressed in roots.

It carries out the reaction 7-deoxyloganetin + UDP-alpha-D-glucose = 7-deoxyloganin + UDP + H(+). Functionally, iridoid glucosyltransferase acting exclusively on 7-deoxyloganetin. No activity with 7-deoxyloganetic acid. The chain is 7-deoxyloganetin glucosyltransferase (UGT85A23) from Catharanthus roseus (Madagascar periwinkle).